The chain runs to 643 residues: RNA-binding protein MEX3D (643 aa).

2 disordered regions span residues 1-48 (MPGS…DAAA) and 61-92 (GLGG…APPD). Positions 18 to 34 (TAGDPGHPHPALAGAED) are enriched in low complexity. Positions 83-92 (CGEDEPAPPD) are enriched in acidic residues. KH domains lie at 160 to 221 (MTEC…KREI) and 253 to 314 (QTTI…REEI). Disordered stretches follow at residues 357–427 (PHPG…GTAT), 471–505 (GAPA…GGLS), and 519–583 (VGAV…APGP). A compositionally biased stretch (gly residues) spans 405-418 (GGSGNGGFTFGGDG). Residue Thr491 is modified to Phosphothreonine. Ser495 is subject to Phosphoserine. Composition is skewed to low complexity over residues 495–505 (SPTLPEPGGLS), 531–556 (LPPF…SSTL), and 567–583 (PSTT…APGP). An RING-type zinc finger spans residues 592 to 632 (CVVCSEGEAMAALVPCGHNLFCMDCAVRICGKSEPECPACR).

The protein localises to the cytoplasm. It is found in the nucleus. Its function is as follows. RNA binding protein, may be involved in post-transcriptional regulatory mechanisms. In Mus musculus (Mouse), this protein is RNA-binding protein MEX3D (Mex3d).